The following is a 248-amino-acid chain: 2,3-bisphosphoglycerate-dependent phosphoglycerate mutase (248 aa).

Residues 8 to 15, 21 to 22, R60, 87 to 90, K98, 114 to 115, and 183 to 184 contribute to the substrate site; these read RHGESQWN, TG, ERHY, RR, and GN. Residue H9 is the Tele-phosphohistidine intermediate of the active site. E87 (proton donor/acceptor) is an active-site residue.

The protein belongs to the phosphoglycerate mutase family. BPG-dependent PGAM subfamily. Homodimer.

It catalyses the reaction (2R)-2-phosphoglycerate = (2R)-3-phosphoglycerate. It functions in the pathway carbohydrate degradation; glycolysis; pyruvate from D-glyceraldehyde 3-phosphate: step 3/5. Its function is as follows. Catalyzes the interconversion of 2-phosphoglycerate and 3-phosphoglycerate. The polypeptide is 2,3-bisphosphoglycerate-dependent phosphoglycerate mutase (Alteromonas mediterranea (strain DSM 17117 / CIP 110805 / LMG 28347 / Deep ecotype)).